We begin with the raw amino-acid sequence, 368 residues long: (Iso)eugenol O-methyltransferase (368 aa).

Positions 1 to 2 are excised as a propeptide; that stretch reads MG. Residues Ser-187, 211–212, Asp-234, 254–255, and Lys-268 contribute to the S-adenosyl-L-methionine site; these read GG and DM. Residue His-272 is the Proton acceptor of the active site.

It belongs to the class I-like SAM-binding methyltransferase superfamily. Cation-independent O-methyltransferase family. COMT subfamily. In terms of assembly, homodimer. Expressed in petals, style and stamens, but not in stigma, sepals, leaves or stem tissues.

The catalysed reaction is (E)-isoeugenol + S-adenosyl-L-methionine = (E)-isomethyleugenol + S-adenosyl-L-homocysteine + H(+). In terms of biological role, catalyzes the methylation of the para-4-hydroxyl of both eugenol and (iso)eugenol to methyleugenol and isomethyleugenol, respectively. The resulting products are part of a complex mixture of low-molecular-weight volatile compounds emitted by the flowers to attract pollinators. The polypeptide is (Iso)eugenol O-methyltransferase (IEMT1) (Clarkia breweri (Fairy fans)).